An 861-amino-acid chain; its full sequence is Methyltransferase/ribosomally synthesized type III borosin cyclic peptide precursor aboMAa (861 aa).

The segment at 1 to 279 (MSSPAVETKV…AISTFYLPPK (279 aa)) is methyltransferase domain. Residues Arg100, Tyr104, and Tyr126 contribute to the active site. Positions 126, 128, 131, 158, 200, 241, 272, and 273 each coordinate S-adenosyl-L-methionine. A clasp domain region spans residues 280–408 (ALSPLHEESA…GLVRSVMKTS (129 aa)). The tract at residues 409–799 (PEDVAKQFVQ…PPDLEELPIP (391 aa)) is type III-specific C-terminal domain. Disordered stretches follow at residues 575–596 (NGAF…SSQG) and 772–801 (EAAE…IPDA). Gly residues predominate over residues 579–593 (PSGGGGGSGGGGGSS). Over residues 772–783 (EAAEKDSAVDDE) the composition is skewed to basic and acidic residues. A compositionally biased stretch (acidic residues) spans 784-797 (KFADEEPPDLEELP). An N-methylvaline mark is found at Val805 and Val807. 9 tandem repeats follow at residues 805–809 (VDVTD), 810–814 (VDVTD), 815–819 (VDVTD), 820–824 (VDVTD), 825–829 (VDVTD), 830–834 (VDVTD), 835–839 (VDVTD), 840–844 (VDVTD), and 845–849 (VDVTD). The segment at 805–854 (VDVTDVDVTDVDVTDVDVTDVDVTDVDVTDVDVTDVDVTDVDVTDVDVVD) is 10 X 5 AA tandem repeats of VDVTD. The residue at position 808 (Thr808) is an N-methylthreonine. N-methylvaline occurs at positions 810 and 812. Thr813 is subject to N-methylthreonine. N-methylvaline occurs at positions 815 and 817. Thr818 is modified (N-methylthreonine). Val820 and Val822 each carry N-methylvaline. Thr823 carries the N-methylthreonine modification. Val825 and Val827 each carry N-methylvaline. Residue Thr828 is modified to N-methylthreonine. 2 positions are modified to N-methylvaline: Val830 and Val832. The residue at position 833 (Thr833) is an N-methylthreonine. A 10; approximate repeat occupies 850–854 (VDVVD).

In the N-terminal section; belongs to the precorrin methyltransferase family. In terms of processing, aboMA automethylates at Val-805, Val-807, Thr-808, Val-810, Val-812, Thr-813, Val-815, Val-817, Thr-818, Val-820, Val-822, Thr-823, Val-825, Val-827 and Thr-828, Val-830, Val-832 and T-833 before being processed by a prolyloligopeptidase which likely forms a peptidyl ester upon removal of the follower propeptide, which then undergoes macrocyclization with the N-terminus of the modified core peptide. Peptide backbone alpha-N-methylations change the physicochemical properties of amide bonds to provide structural constraints and other favorable characteristics including biological membrane permeability to peptides.

It functions in the pathway secondary metabolite biosynthesis. Its function is as follows. Fusion protein of the methyltransferase aboM and a type III borosin core peptide; part of the gene cluster that mediates the biosynthesis of a type III borosin, a highly methylated cyclic peptide with potent biological activities. Type III borosins derive from the C-terminus of the fusion protein, and it is the same protein that methylates its own C-terminus using S-adenosyl methionine (SAM). The C-terminus is subsequently cleaved off and macrocyclized by a prolyloligopeptidase to give the final product. The polypeptide is Methyltransferase/ribosomally synthesized type III borosin cyclic peptide precursor aboMAa (Anomoporia bombycina (Polyporus bombycinus)).